The primary structure comprises 128 residues: Putative pre-16S rRNA nuclease (128 aa).

This sequence belongs to the YqgF nuclease family.

Its subcellular location is the cytoplasm. Its function is as follows. Could be a nuclease involved in processing of the 5'-end of pre-16S rRNA. The protein is Putative pre-16S rRNA nuclease of Sulfurovum sp. (strain NBC37-1).